The following is a 781-amino-acid chain: MDIFKVLSRGIKAQPKKNQPGAPQLLPSAGAKVNPQFFHDNVGGANAKRGKKRKRKGAQANNATESGDEDDDASDVDYFAPKPTPEELAAKKDAELKADEPKKQKPKLLEENECRQILKSHRLKFTVLAGRVPQDEAATEEKPPKKQKKQKEDRKKQEEEEKKKKKKDEDKKQIYPQPLNSFGELKYTYGIHPVLADNITRQGFRVPTEVQMGSLPLQLRPEMALEKATDVEDVKVEKGIDFLGVAPTGSGKTISFLIPAIDAIIKRRAEDYTPETDEHVLQAIVVAPTRELASQIVNEGRKLAIGTGVRVVLMKRTLRLVAESNEQEETEQEAKEEVQDSDSDSEAESEPEEVMKIDEEEEEEEESDSDAEKKTESRAKGDQKFKKERPITRVDILVTTPKILLNFLCGGEKEKGKPRIIKKTLPTVQSLILDEADVLLDPIFRKQTMGIWRACTHPNLGMTCWSATMASNIEALLTKHIDKRAKRTPEQTPKPLIRLVVGLKDTAVPNITHKLIYTATEPGKLLALRQLLHPVSSADSGPPLRPPFLVFTQTIERAQALHDELKYDIPLEAGGSARVAVLHSSLPDSVRSKIMARFRSGEVWVLITTDVLARGVDFAGVNGVVNYDVPVSAAAYVHRAGRTGRAGREGGVAVTFYTKDDIPFVKSVANVIAMSEKQAGKDIDEKDTVKAAQGSVQKWLLDALPKVAKEDKRKLKVRGVESRRTGGKATITTKSSWERRRENNRREAIEASKRRKREAQKAQKEGGAAPEKAEEEWTGLD.

2 disordered regions span residues 7-108 (LSRG…KPKL) and 134-177 (QDEA…IYPQ). Residues 48-57 (KRGKKRKRKG) are compositionally biased toward basic residues. The span at 66–75 (SGDEDDDASD) shows a compositional bias: acidic residues. 2 stretches are compositionally biased toward basic and acidic residues: residues 84 to 108 (TPEE…KPKL) and 139 to 173 (TEEK…DKKQ). A Q motif motif is present at residues 184-212 (ELKYTYGIHPVLADNITRQGFRVPTEVQM). Residues 233–487 (DVKVEKGIDF…TKHIDKRAKR (255 aa)) enclose the Helicase ATP-binding domain. Position 246–253 (246–253 (APTGSGKT)) interacts with ATP. Residues 323 to 386 (ESNEQEETEQ…SRAKGDQKFK (64 aa)) form a disordered region. Over residues 339-369 (QDSDSDSEAESEPEEVMKIDEEEEEEEESDS) the composition is skewed to acidic residues. The segment covering 370–386 (DAEKKTESRAKGDQKFK) has biased composition (basic and acidic residues). The DEAD box signature appears at 434 to 437 (DEAD). Residues 527–689 (ALRQLLHPVS…GKDIDEKDTV (163 aa)) enclose the Helicase C-terminal domain. A disordered region spans residues 718–781 (RGVESRRTGG…KAEEEWTGLD (64 aa)). The span at 736–752 (SWERRRENNRREAIEAS) shows a compositional bias: basic and acidic residues.

This sequence belongs to the DEAD box helicase family. DDX52/ROK1 subfamily. Interacts with the U3 snoRNA and is associated with the 90S and 40S pre-ribosomes.

It localises to the nucleus. It is found in the nucleolus. It catalyses the reaction ATP + H2O = ADP + phosphate + H(+). Functionally, ATP-dependent RNA helicase involved in 40S ribosomal subunit biogenesis. Required for the processing and cleavage of 35S pre-rRNA at sites A0, A1, and A2, leading to mature 18S rRNA. The chain is ATP-dependent RNA helicase rok1 (drh-16) from Neurospora crassa (strain ATCC 24698 / 74-OR23-1A / CBS 708.71 / DSM 1257 / FGSC 987).